Consider the following 522-residue polypeptide: Protein nucleotidyltransferase YdiU (522 aa).

8 residues coordinate ATP: Gly-109, Gly-111, Arg-112, Lys-132, Asp-144, Gly-145, Arg-195, and Arg-202. Catalysis depends on Asp-271, which acts as the Proton acceptor. Mg(2+) contacts are provided by Asn-272 and Asp-281. Asp-281 serves as a coordination point for ATP.

It belongs to the SELO family. Requires Mg(2+) as cofactor. The cofactor is Mn(2+).

The catalysed reaction is L-seryl-[protein] + ATP = 3-O-(5'-adenylyl)-L-seryl-[protein] + diphosphate. The enzyme catalyses L-threonyl-[protein] + ATP = 3-O-(5'-adenylyl)-L-threonyl-[protein] + diphosphate. It carries out the reaction L-tyrosyl-[protein] + ATP = O-(5'-adenylyl)-L-tyrosyl-[protein] + diphosphate. It catalyses the reaction L-histidyl-[protein] + UTP = N(tele)-(5'-uridylyl)-L-histidyl-[protein] + diphosphate. The catalysed reaction is L-seryl-[protein] + UTP = O-(5'-uridylyl)-L-seryl-[protein] + diphosphate. The enzyme catalyses L-tyrosyl-[protein] + UTP = O-(5'-uridylyl)-L-tyrosyl-[protein] + diphosphate. Functionally, nucleotidyltransferase involved in the post-translational modification of proteins. It can catalyze the addition of adenosine monophosphate (AMP) or uridine monophosphate (UMP) to a protein, resulting in modifications known as AMPylation and UMPylation. This Burkholderia cenocepacia (strain HI2424) protein is Protein nucleotidyltransferase YdiU.